The primary structure comprises 113 residues: MDGRVQLIKALLALPIRPQTRRWRNPIPFPETFDGDTDRLPEFIVQTGAYMLVDENLFTNDALKVTFLITRMTGPALQWVIPYIRKQSPLLNDYRGFLAEMKRVFGWVEDEDF.

Belongs to the FAM127 family.

The protein is Retrotransposon Gag-like protein 8 (RTL8A) of Bos taurus (Bovine).